The following is a 490-amino-acid chain: GTPase Der (490 aa).

EngA-type G domains are found at residues 3–167 (FTLA…DAFE) and 203–378 (LQVA…EVWN). GTP-binding positions include 9–16 (GRPNVGKS), 56–60 (DTAGL), 119–122 (NKAE), 209–216 (GRPNAGKS), 256–260 (DTAGM), and 321–324 (NKWD). Residues 379-465 (RRVPTAALNR…RLTMRSQSDA (87 aa)) form the KH-like domain. Positions 451–490 (PGTPIRLTMRSQSDANPYKNRKKSTPSRLRKHLGKPSLKG) are disordered. Residues 469–484 (KNRKKSTPSRLRKHLG) are compositionally biased toward basic residues.

Belongs to the TRAFAC class TrmE-Era-EngA-EngB-Septin-like GTPase superfamily. EngA (Der) GTPase family. In terms of assembly, associates with the 50S ribosomal subunit.

Functionally, GTPase that plays an essential role in the late steps of ribosome biogenesis. The polypeptide is GTPase Der (Dinoroseobacter shibae (strain DSM 16493 / NCIMB 14021 / DFL 12)).